The following is a 1488-amino-acid chain: Chromosome partition protein MukB (1488 aa).

Position 34–41 (34–41 (GGNGAGKS)) interacts with ATP. Coiled-coil stretches lie at residues 326–418 (LEAD…QYNQ), 444–472 (LDTFQAKEQEATEKLLSLEQKMSVAQTAH), and 509–602 (RHLA…QRAP). Residues 666–783 (PGGAEDQRLN…SLPIFGRAAR (118 aa)) form a flexible hinge region. Coiled coils occupy residues 835–923 (EAEI…AKLE), 977–1116 (EMLS…AKAG), and 1209–1265 (VEAI…LQSV). Residues 1049 to 1074 (ADSGAEERARQRRDELHAQLSNNRSR) are disordered. A compositionally biased stretch (basic and acidic residues) spans 1051–1065 (SGAEERARQRRDELH).

It belongs to the SMC family. MukB subfamily. Homodimerization via its hinge domain. Binds to DNA via its C-terminal region. Interacts, and probably forms a ternary complex, with MukE and MukF via its C-terminal region. The complex formation is stimulated by calcium or magnesium. Interacts with tubulin-related protein FtsZ.

The protein resides in the cytoplasm. It localises to the nucleoid. Plays a central role in chromosome condensation, segregation and cell cycle progression. Functions as a homodimer, which is essential for chromosome partition. Involved in negative DNA supercoiling in vivo, and by this means organize and compact chromosomes. May achieve or facilitate chromosome segregation by condensation DNA from both sides of a centrally located replisome during cell division. This Salmonella typhi protein is Chromosome partition protein MukB.